Reading from the N-terminus, the 226-residue chain is Ribose-5-phosphate isomerase A (226 aa).

Substrate contacts are provided by residues 32 to 35 (TGST), 85 to 88 (DGAD), and 98 to 101 (KGGG). The Proton acceptor role is filled by glutamate 107. Lysine 125 contacts substrate.

Belongs to the ribose 5-phosphate isomerase family. As to quaternary structure, homodimer.

It catalyses the reaction aldehydo-D-ribose 5-phosphate = D-ribulose 5-phosphate. The protein operates within carbohydrate degradation; pentose phosphate pathway; D-ribose 5-phosphate from D-ribulose 5-phosphate (non-oxidative stage): step 1/1. Functionally, catalyzes the reversible conversion of ribose-5-phosphate to ribulose 5-phosphate. This chain is Ribose-5-phosphate isomerase A, found in Saccharophagus degradans (strain 2-40 / ATCC 43961 / DSM 17024).